The sequence spans 49 residues: Large ribosomal subunit protein bL33 (49 aa).

Belongs to the bacterial ribosomal protein bL33 family.

In Natranaerobius thermophilus (strain ATCC BAA-1301 / DSM 18059 / JW/NM-WN-LF), this protein is Large ribosomal subunit protein bL33.